The chain runs to 119 residues: Large ribosomal subunit protein uL24 (119 aa).

The protein belongs to the universal ribosomal protein uL24 family. As to quaternary structure, part of the 50S ribosomal subunit.

In terms of biological role, one of two assembly initiator proteins, it binds directly to the 5'-end of the 23S rRNA, where it nucleates assembly of the 50S subunit. Its function is as follows. Located at the polypeptide exit tunnel on the outside of the subunit. In Methanosarcina acetivorans (strain ATCC 35395 / DSM 2834 / JCM 12185 / C2A), this protein is Large ribosomal subunit protein uL24.